Here is a 224-residue protein sequence, read N- to C-terminus: 7-cyano-7-deazaguanine synthase (224 aa).

Residue 9 to 19 (LSGGLDSATVL) coordinates ATP. 4 residues coordinate Zn(2+): C189, C199, C202, and C205.

The protein belongs to the QueC family. Requires Zn(2+) as cofactor.

The catalysed reaction is 7-carboxy-7-deazaguanine + NH4(+) + ATP = 7-cyano-7-deazaguanine + ADP + phosphate + H2O + H(+). The protein operates within purine metabolism; 7-cyano-7-deazaguanine biosynthesis. In terms of biological role, catalyzes the ATP-dependent conversion of 7-carboxy-7-deazaguanine (CDG) to 7-cyano-7-deazaguanine (preQ(0)). In Ralstonia nicotianae (strain ATCC BAA-1114 / GMI1000) (Ralstonia solanacearum), this protein is 7-cyano-7-deazaguanine synthase.